The primary structure comprises 245 residues: RAD51-like protein 1 (245 aa).

As to quaternary structure, interacts with brc-2 and rad-51.

The protein resides in the nucleus. Functionally, has a role in the homologous recombination repair (HRR) of genomic DNA during meiosis. Required for rad-51 recruitment onto ssDNA gaps generated at stalled replication fork barriers. The protein is RAD51-like protein 1 (rfs-1) of Caenorhabditis elegans.